We begin with the raw amino-acid sequence, 293 residues long: Signal recognition particle receptor FtsY (293 aa).

Residues 93-100 (GVNGAGKT), 175-179 (DTAGR), and 239-242 (TKLD) contribute to the GTP site.

This sequence belongs to the GTP-binding SRP family. FtsY subfamily. Part of the signal recognition particle protein translocation system, which is composed of SRP and FtsY. SRP is a ribonucleoprotein composed of Ffh and a 4.5S RNA molecule.

It localises to the cell inner membrane. Its subcellular location is the cytoplasm. The enzyme catalyses GTP + H2O = GDP + phosphate + H(+). Functionally, involved in targeting and insertion of nascent membrane proteins into the cytoplasmic membrane. Acts as a receptor for the complex formed by the signal recognition particle (SRP) and the ribosome-nascent chain (RNC). Interaction with SRP-RNC leads to the transfer of the RNC complex to the Sec translocase for insertion into the membrane, the hydrolysis of GTP by both Ffh and FtsY, and the dissociation of the SRP-FtsY complex into the individual components. In Helicobacter pylori (strain ATCC 700392 / 26695) (Campylobacter pylori), this protein is Signal recognition particle receptor FtsY.